A 151-amino-acid polypeptide reads, in one-letter code: Probable flavodoxin 2 (151 aa).

A Flavodoxin-like domain is found at 4 to 144 (ILLVYATMSG…ELINFGRQFA (141 aa)). Residues 10–14 (TMSGN) and 88–119 (VFGSGDTAYEFFCGAVDTLEAKIKERGGDIVL) each bind FMN.

The protein belongs to the flavodoxin family. It depends on FMN as a cofactor.

Low-potential electron donor to a number of redox enzymes. This Bacillus subtilis (strain 168) protein is Probable flavodoxin 2 (ykuP).